Reading from the N-terminus, the 312-residue chain is tRNA pseudouridine synthase B (312 aa).

Asp-37 (nucleophile) is an active-site residue.

Belongs to the pseudouridine synthase TruB family. Type 1 subfamily.

The enzyme catalyses uridine(55) in tRNA = pseudouridine(55) in tRNA. Functionally, responsible for synthesis of pseudouridine from uracil-55 in the psi GC loop of transfer RNAs. The chain is tRNA pseudouridine synthase B from Thermus thermophilus (strain ATCC BAA-163 / DSM 7039 / HB27).